Reading from the N-terminus, the 102-residue chain is Monothiol glutaredoxin-S1 (102 aa).

The Glutaredoxin domain occupies 1–101 (MEKISNLLED…SLLRRAGAIW (101 aa)). Position 21 (Cys-21) interacts with [2Fe-2S] cluster.

Belongs to the glutaredoxin family. CC-type subfamily.

It is found in the cytoplasm. May only reduce GSH-thiol disulfides, but not protein disulfides. This chain is Monothiol glutaredoxin-S1 (GRXS1), found in Arabidopsis thaliana (Mouse-ear cress).